Reading from the N-terminus, the 473-residue chain is Chaperone SurA (473 aa).

The signal sequence occupies residues 1–36; it reads MTNDRLFAGIARVLSVRPLAAALALLLTLPLIGVQA. 2 PpiC domains span residues 214–315 and 326–425; these read SLAL…KVIE and ITQT…QVLE.

It localises to the periplasm. It catalyses the reaction [protein]-peptidylproline (omega=180) = [protein]-peptidylproline (omega=0). In terms of biological role, chaperone involved in the correct folding and assembly of outer membrane proteins. Recognizes specific patterns of aromatic residues and the orientation of their side chains, which are found more frequently in integral outer membrane proteins. May act in both early periplasmic and late outer membrane-associated steps of protein maturation. This chain is Chaperone SurA, found in Polaromonas sp. (strain JS666 / ATCC BAA-500).